Here is a 362-residue protein sequence, read N- to C-terminus: Phosphoserine aminotransferase (362 aa).

Arg43 provides a ligand contact to L-glutamate. Pyridoxal 5'-phosphate is bound by residues 77-78 (AR), Trp103, Thr153, Asp173, and Gln196. An N6-(pyridoxal phosphate)lysine modification is found at Lys197.

Belongs to the class-V pyridoxal-phosphate-dependent aminotransferase family. SerC subfamily. Homodimer. Requires pyridoxal 5'-phosphate as cofactor.

It localises to the cytoplasm. The enzyme catalyses O-phospho-L-serine + 2-oxoglutarate = 3-phosphooxypyruvate + L-glutamate. The catalysed reaction is 4-(phosphooxy)-L-threonine + 2-oxoglutarate = (R)-3-hydroxy-2-oxo-4-phosphooxybutanoate + L-glutamate. Its pathway is amino-acid biosynthesis; L-serine biosynthesis; L-serine from 3-phospho-D-glycerate: step 2/3. It functions in the pathway cofactor biosynthesis; pyridoxine 5'-phosphate biosynthesis; pyridoxine 5'-phosphate from D-erythrose 4-phosphate: step 3/5. Its function is as follows. Catalyzes the reversible conversion of 3-phosphohydroxypyruvate to phosphoserine and of 3-hydroxy-2-oxo-4-phosphonooxybutanoate to phosphohydroxythreonine. The chain is Phosphoserine aminotransferase from Legionella pneumophila (strain Corby).